The following is a 166-amino-acid chain: EAVAPYERPALSKNIFYLREIADADQLVEAIKLKDGRTLDADIVVVGVGGRPLVSLFKTSIPDVYAVGDVATYPLKLYNELRRVEHVDHARLSIEEYDYLPYFYSRTFNLAWQFYGDNVGETVLFPDNFGTYWIKVVGVFLEGGTPDEYKVARVQPPVESLDQLAK.

It belongs to the FAD-dependent oxidoreductase family. FAD serves as cofactor. Post-translationally, the N-terminus is blocked.

It carries out the reaction 2 monodehydro-L-ascorbate radical + NADH + H(+) = 2 L-ascorbate + NAD(+). Catalyzes the conversion of monodehydroascorbate to ascorbate, oxidizing NADH in the process. In Cucumis sativus (Cucumber), this protein is Monodehydroascorbate reductase, fruit isozyme.